The following is a 607-amino-acid chain: Matrix metalloproteinase-16 (607 aa).

The first 31 residues, 1–31 (MILLAFSSGRRLDFVHRSGVFFFQTLLWILC), serve as a signal peptide directing secretion. Positions 32–119 (ATVCGTEQYF…SSKFNIRRKR (88 aa)) are excised as a propeptide. The N-linked (GlcNAc...) asparagine glycan is linked to Asn-83. Residues 99–106 (PRCGVPDQ) carry the Cysteine switch motif. Zn(2+) is bound at residue Cys-101. The Extracellular segment spans residues 120-564 (YALTGQKWQH…LDNTASTVKA (445 aa)). Asp-183 provides a ligand contact to Ca(2+). His-193 and Asp-195 together coordinate Zn(2+). Residues Asp-200, Gly-201, Gly-203, and Phe-205 each contribute to the Ca(2+) site. Zn(2+) is bound at residue His-208. Positions 215, 217, and 219 each coordinate Ca(2+). His-221 is a Zn(2+) binding site. 2 residues coordinate Ca(2+): Asp-223 and Glu-226. Residue His-246 participates in Zn(2+) binding. Residue Glu-247 is part of the active site. 2 residues coordinate Zn(2+): His-250 and His-256. The segment at 281–340 (DDLQGIQKIYGPPDKIPPPTRPLPTVPPHRSVPPADPRKNDRPKPPRPPTGRPSYPGAKP) is disordered. The span at 294 to 315 (DKIPPPTRPLPTVPPHRSVPPA) shows a compositional bias: pro residues. Hemopexin repeat units follow at residues 340 to 388 (PNIC…WRGL), 389 to 434 (PPSI…GNGI), 436 to 484 (PHGI…KGIP), and 485 to 532 (ESPQ…FMGC). A disulfide bridge links Cys-343 with Cys-532. The chain crosses the membrane as a helical span at residues 565-585 (IAIVIPCILALCLLVLVYTVF). At 586–607 (QFKRKGTPRHILYCKRSMQEWV) the chain is on the cytoplasmic side.

The protein belongs to the peptidase M10A family. Interacts with CSPG4 through CSPG4 chondroitin sulfate glycosaminoglycan. It depends on Zn(2+) as a cofactor. Ca(2+) serves as cofactor. Post-translationally, the precursor is cleaved by a furin endopeptidase. As to expression, strongly expressed in the lung, brain and smooth muscle cells. Weakly detectable in the spleen and liver and indetectable in the heart, skeletal muscle and kidney.

The protein resides in the cell membrane. Its subcellular location is the secreted. The protein localises to the extracellular space. It is found in the extracellular matrix. Functionally, endopeptidase that degrades various components of the extracellular matrix, such as collagen type III and fibronectin. Activates progelatinase A. Involved in the matrix remodeling of blood vessels. The short isoform efficiently converts progelatinase A to the intermediate form but not to the mature one. It has no effect on type I, II, IV and V collagen. However, upon interaction with CSPG4, it may be involved in degradation and invasion of type I collagen by melanoma cells. This chain is Matrix metalloproteinase-16 (Mmp16), found in Rattus norvegicus (Rat).